The primary structure comprises 366 residues: Tyrosyl-DNA phosphodiesterase 2 (366 aa).

Position 1 is an N-acetylmethionine (M1). Residues 1–22 (MASGSSSDAAESAEPAAAPAAA) show a composition bias toward low complexity. The disordered stretch occupies residues 1 to 30 (MASGSSSDAAESAEPAAAPAAAETEEDQVK). K30 participates in a covalent cross-link: Glycyl lysine isopeptide (Lys-Gly) (interchain with G-Cter in SUMO2). At T95 the chain carries Phosphothreonine; by ACVR1B. The segment at 126 to 130 (NIDGL) is interaction with 5' end of substrate DNA. Mg(2+)-binding residues include D128 and E158. The segment at 232-237 (HLESTR) is interaction with 5' end of substrate DNA. Residue D268 is the Proton donor/acceptor of the active site. Residues 270 to 272 (NLR) are interaction with 5' end of substrate DNA.

It belongs to the CCR4/nocturin family. In terms of assembly, interacts with TRAF2, TRAF3, TRAF5, TRAF6, TNFRSF8/CD30, TNFRSF5/CD40, TNFRSF1B/TNF-R75, ETS1, ETS2, FLI1, SMAD3 and ACVR1B/ALK4. The cofactor is Mg(2+). Mn(2+) is required as a cofactor. Post-translationally, ubiquitinated by TRAF6.

Its subcellular location is the nucleus. It is found in the PML body. The protein localises to the nucleolus. It localises to the cytoplasm. DNA repair enzyme that can remove a variety of covalent adducts from DNA through hydrolysis of a 5'-phosphodiester bond, giving rise to DNA with a free 5' phosphate. Catalyzes the hydrolysis of dead-end complexes between DNA and the topoisomerase 2 (TOP2) active site tyrosine residue. The 5'-tyrosyl DNA phosphodiesterase activity can enable the repair of TOP2-induced DNA double-strand breaks/DSBs without the need for nuclease activity, creating a 'clean' DSB with 5'-phosphate termini that are ready for ligation. Thereby, protects the transcription of many genes involved in neurological development and maintenance from the abortive activity of TOP2. Hydrolyzes 5'-phosphoglycolates on protruding 5' ends on DSBs due to DNA damage by radiation and free radicals. Has preference for single-stranded DNA or duplex DNA with a 4 base pair overhang as substrate. Also has 3'-tyrosyl DNA phosphodiesterase activity, but less efficiently and much slower than TDP1. Constitutes the major if not only 5'-tyrosyl-DNA phosphodiesterase in cells. Also acts as an adapter by participating in the specific activation of MAP3K7/TAK1 in response to TGF-beta: associates with components of the TGF-beta receptor-TRAF6-TAK1 signaling module and promotes their ubiquitination dependent complex formation. Involved in non-canonical TGF-beta induced signaling routes. May also act as a negative regulator of ETS1 and may inhibit NF-kappa-B activation. Acts as a regulator of ribosome biogenesis following stress. The chain is Tyrosyl-DNA phosphodiesterase 2 (Tdp2) from Rattus norvegicus (Rat).